A 543-amino-acid chain; its full sequence is Aspartate/alanine antiporter (543 aa).

The next 10 helical transmembrane spans lie at Ile4–Leu26, Ser33–Phe55, Phe88–Cys110, Gly117–Leu139, Ile159–Leu178, Ile362–Val381, Val385–Ile407, Ser428–Ile450, Ile455–Tyr477, and Val520–Leu542.

The protein belongs to the AAE transporter (TC 2.A.81) family.

It is found in the cell membrane. Functionally, catalyzes the electrogenic exchange of aspartate with alanine. This Tetragenococcus halophilus (Pediococcus halophilus) protein is Aspartate/alanine antiporter (aspT).